The sequence spans 321 residues: Lipoyl synthase (321 aa).

[4Fe-4S] cluster is bound by residues cysteine 68, cysteine 73, cysteine 79, cysteine 94, cysteine 98, cysteine 101, and serine 308. One can recognise a Radical SAM core domain in the interval 80–297; that stretch reads FNHGTATFMI…KEQALAMGFT (218 aa).

Belongs to the radical SAM superfamily. Lipoyl synthase family. It depends on [4Fe-4S] cluster as a cofactor.

It localises to the cytoplasm. The catalysed reaction is [[Fe-S] cluster scaffold protein carrying a second [4Fe-4S](2+) cluster] + N(6)-octanoyl-L-lysyl-[protein] + 2 oxidized [2Fe-2S]-[ferredoxin] + 2 S-adenosyl-L-methionine + 4 H(+) = [[Fe-S] cluster scaffold protein] + N(6)-[(R)-dihydrolipoyl]-L-lysyl-[protein] + 4 Fe(3+) + 2 hydrogen sulfide + 2 5'-deoxyadenosine + 2 L-methionine + 2 reduced [2Fe-2S]-[ferredoxin]. It functions in the pathway protein modification; protein lipoylation via endogenous pathway; protein N(6)-(lipoyl)lysine from octanoyl-[acyl-carrier-protein]: step 2/2. Catalyzes the radical-mediated insertion of two sulfur atoms into the C-6 and C-8 positions of the octanoyl moiety bound to the lipoyl domains of lipoate-dependent enzymes, thereby converting the octanoylated domains into lipoylated derivatives. This is Lipoyl synthase from Proteus mirabilis (strain HI4320).